The sequence spans 240 residues: Molybdate/tungstate import ATP-binding protein WtpC (240 aa).

In terms of domain architecture, ABC transporter spans 2-227; it reads FLKVRAEKRL…KNGEVAEFLS (226 aa). Residue 31–38 participates in ATP binding; sequence GPTGAGKS.

The protein belongs to the ABC transporter superfamily. Sulfate/tungstate importer (TC 3.A.1.6) family. In terms of assembly, the complex is composed of two ATP-binding proteins (WtpC), two transmembrane proteins (WtpB) and a solute-binding protein (WtpA).

It localises to the cell membrane. The enzyme catalyses tungstate(in) + ATP + H2O = tungstate(out) + ADP + phosphate + H(+). In terms of biological role, part of the ABC transporter complex WtpABC involved in molybdate/tungstate import. Responsible for energy coupling to the transport system. This chain is Molybdate/tungstate import ATP-binding protein WtpC (wtpC), found in Archaeoglobus fulgidus (strain ATCC 49558 / DSM 4304 / JCM 9628 / NBRC 100126 / VC-16).